The sequence spans 338 residues: High mobility group B protein 9 (338 aa).

The ARID domain maps to 38–129; it reads VKDSSVFWDT…LLFHYEQVHL (92 aa). Residues 233–259 are disordered; it reads TGRRRRRLGKRRRSRRREDPNYPKPNR. The segment covering 235–247 has biased composition (basic residues); that stretch reads RRRRRLGKRRRSR. Residues 255–322 constitute a DNA-binding region (HMG box); the sequence is PKPNRSGYNF…RYQRELNEYR (68 aa).

In terms of tissue distribution, predominantly expressed in leaves, flowers and seedlings.

It is found in the nucleus. In terms of biological role, binds preferentially DNA with A/T-rich content. Required for karyogamy during female gametophyte development, when the two polar nuclei fuse to form the diploid central cell nucleus. This chain is High mobility group B protein 9 (HMGB9), found in Arabidopsis thaliana (Mouse-ear cress).